Reading from the N-terminus, the 279-residue chain is RxLR effector protein Avh331 (279 aa).

The signal sequence occupies residues 1–20 (MMQWSAILIRTCFSGSGGEA). Residues 86-106 (RSLRSQATNVDDDANVSIENR) carry the RxLR-dEER motif. Asn100 carries N-linked (GlcNAc...) asparagine glycosylation. Positions 129–147 (ANKLWLMADVDPKSAFKLL) are W1 motif. Positions 153–174 (GVRFIDNPKMLQWLKFTKAYLD) are Y1 motif. Positions 178 to 208 (SGFGETSAHALLYEKIGGPDLSLLLLSLKDA) are l motif. The tract at residues 222–240 (QFGMWHDARIEPEQLAQTV) is W2 motif. Residues 250–271 (PKNDPKLQVIDDYAKYHRKHRK) are Y2 motif.

It belongs to the RxLR effector family.

It is found in the secreted. Its subcellular location is the host cell. Its function is as follows. Effector that suppresses the host mitogen-activated protein kinase (MAPK)-based plant defense activated by the Phytophthora elicitor to promote colonization of the Phytophthora pathogen. Neither directly inhibits MAPK kinase activity nor interacts with MAPK proteins but acts downstream by suppressing transcriptional activation of resistance marker genes such as FRK1, WRKY22 and WRKY29. Confers avirulence in the presence of resistance protein Rps1k in host. This chain is RxLR effector protein Avh331, found in Phytophthora sojae (strain P6497) (Soybean stem and root rot agent).